A 277-amino-acid polypeptide reads, in one-letter code: Deoxyguanosine kinase, mitochondrial (277 aa).

Residues 1–39 (MAAGRFLLRRLRASFRSPLRNALVDAPHARAMHDGGGPR) constitute a mitochondrion transit peptide. 45–53 (GNIAVGKST) is an ATP binding site. 4 residues coordinate substrate: E70, Y100, Q111, and R118. E141 functions as the Proton acceptor in the catalytic mechanism. Substrate is bound by residues R142 and D147. 206-208 (RDR) contacts ATP. E211 contributes to the substrate binding site. ATP is bound at residue 254–256 (EDF).

This sequence belongs to the DCK/DGK family. In terms of assembly, homodimer. In terms of tissue distribution, spleen and thymus. Expressed at much lower levels in the brain and liver.

The protein resides in the mitochondrion. Its subcellular location is the cytoplasm. It carries out the reaction 2'-deoxyguanosine + ATP = dGMP + ADP + H(+). The catalysed reaction is 2'-deoxyadenosine + ATP = dAMP + ADP + H(+). Phosphorylates deoxyguanosine and deoxyadenosine in the mitochondrial matrix, with the highest efficiency for deoxyguanosine. In non-replicating cells, where cytosolic dNTP synthesis is down-regulated, mtDNA synthesis depends solely on DGUOK and TK2. Phosphorylates certain nucleoside analogs. Widely used as target of antiviral and chemotherapeutic agents. In Mus musculus (Mouse), this protein is Deoxyguanosine kinase, mitochondrial (Dguok).